The chain runs to 481 residues: F-box/FBD/LRR-repeat protein At5g18770 (481 aa).

The 47-residue stretch at glutamate 23 to asparagine 69 folds into the F-box domain. LRR repeat units lie at residues lysine 126–alanine 153, cysteine 159–aspartate 185, valine 186–leucine 211, aspartate 214–arginine 234, valine 236–aspartate 261, aspartate 289–tryptophan 314, and alanine 340–leucine 368. One can recognise an FBD domain in the interval valine 378–leucine 430.

This Arabidopsis thaliana (Mouse-ear cress) protein is F-box/FBD/LRR-repeat protein At5g18770.